A 307-amino-acid polypeptide reads, in one-letter code: ADP,ATP carrier protein 3 (307 aa).

Solcar repeat units follow at residues 10-103 (TNFA…IKLM), 114-206 (KWFA…LKPL), and 214-300 (GSFL…LQMI). 5 helical membrane-spanning segments follow: residues 12-39 (FAIN…VKIL), 80-104 (TANV…KLMF), 112-132 (YGKW…LSLL), 182-203 (FMPS…FDSL), and 217-237 (LASF…SYPL). Residues R85 and K97 each contribute to the ADP site. R241 contributes to the ADP binding site. Residues 241 to 246 (RRRMMM) are important for transport activity. The short motif at 241–246 (RRRMMM) is the Nucleotide carrier signature motif element. The helical transmembrane segment at 277–297 (CGANILRSVAGAGVISMYDQL) threads the bilayer.

The protein belongs to the mitochondrial carrier (TC 2.A.29) family. Monomer.

The protein localises to the mitochondrion inner membrane. It catalyses the reaction ADP(in) + ATP(out) = ADP(out) + ATP(in). Its activity is regulated as follows. The matrix-open state (m-state) is inhibited by the membrane-permeable bongkrekic acid (BKA). The cytoplasmic-open state (c-state) is inhibited by the membrane-impermeable toxic inhibitor carboxyatractyloside (CATR). Functionally, ADP:ATP antiporter that mediates import of ADP into the mitochondrial matrix for ATP synthesis, and export of ATP out to fuel the cell. Cycles between the cytoplasmic-open state (c-state) and the matrix-open state (m-state): operates by the alternating access mechanism with a single substrate-binding site intermittently exposed to either the cytosolic (c-state) or matrix (m-state) side of the inner mitochondrial membrane. The protein is ADP,ATP carrier protein 3 (AAC3) of Saccharomyces cerevisiae (strain ATCC 204508 / S288c) (Baker's yeast).